A 330-amino-acid chain; its full sequence is Transcription factor TGA2 (330 aa).

The tract at residues M1–L48 is disordered. Residues S35–T47 show a composition bias toward basic and acidic residues. In terms of domain architecture, bZIP spans D44–G107. Coiled coils occupy residues Q45–D142 and I217–D244. A basic motif region spans residues K46–K66. The leucine-zipper stretch occupies residues L72–L86. Residues A111–R327 enclose the DOG1 domain.

This sequence belongs to the bZIP family. In terms of assembly, binds DNA as a dimer. Interacts with NPR1, NPR3 and NPR4. Interacts with GRXC7/ROXY1 and GRXC9/GRX480. In terms of tissue distribution, expressed in the whole plant.

The protein localises to the nucleus. In terms of biological role, transcriptional activator that binds specifically to the DNA sequence 5'-TGACG-3'. Recognizes ocs elements like the as-1 motif of the cauliflower mosaic virus 35S promoter. Binding to the as-1-like cis elements mediate auxin- and salicylic acid-inducible transcription. Required to induce the systemic acquired resistance (SAR) via the regulation of pathogenesis-related genes expression. Binding to the as-1 element of PR-1 promoter is salicylic acid-inducible and mediated by NPR1. Could also bind to the C-boxes (5'-ATGACGTCAT-3') with high affinity. In Arabidopsis thaliana (Mouse-ear cress), this protein is Transcription factor TGA2 (TGA2).